A 542-amino-acid chain; its full sequence is Isocitrate lyase (542 aa).

Residue Ser102–Trp104 coordinates substrate. Asp170 is a binding site for Mg(2+). Cys208 serves as the catalytic Proton acceptor. Residues Gly209 to His210, Arg245, Asn428 to Ser432, and Thr462 contribute to the substrate site.

The protein belongs to the isocitrate lyase/PEP mutase superfamily. Isocitrate lyase family. In terms of assembly, homotetramer. Requires Mg(2+) as cofactor.

The protein resides in the glyoxysome. The catalysed reaction is D-threo-isocitrate = glyoxylate + succinate. It catalyses the reaction (2S,3R)-3-hydroxybutane-1,2,3-tricarboxylate = pyruvate + succinate. Its pathway is carbohydrate metabolism; glyoxylate cycle; (S)-malate from isocitrate: step 1/2. In terms of biological role, catalyzes the formation of succinate and glyoxylate from isocitrate, a key step of the glyoxylate cycle, which operates as an anaplerotic route for replenishing the tricarboxylic acid cycle. Required for growth on ethanol or acetate, but dispensable when fermentable carbon sources are available. Also acts on 2-methylisocitrate. This chain is Isocitrate lyase, found in Kluyveromyces lactis (strain ATCC 8585 / CBS 2359 / DSM 70799 / NBRC 1267 / NRRL Y-1140 / WM37) (Yeast).